The sequence spans 424 residues: Dihydroorotase (424 aa).

Zn(2+)-binding residues include His58 and His60. Substrate is bound by residues His60–Arg62, Asn92, and Asn276. Zn(2+) is bound at residue Asp303. Residue Asp303 is part of the active site. Substrate is bound by residues His307 and Phe321–Gly322.

The protein belongs to the metallo-dependent hydrolases superfamily. DHOase family. Class I DHOase subfamily. It depends on Zn(2+) as a cofactor.

The catalysed reaction is (S)-dihydroorotate + H2O = N-carbamoyl-L-aspartate + H(+). It participates in pyrimidine metabolism; UMP biosynthesis via de novo pathway; (S)-dihydroorotate from bicarbonate: step 3/3. Catalyzes the reversible cyclization of carbamoyl aspartate to dihydroorotate. In Staphylococcus aureus (strain COL), this protein is Dihydroorotase.